Reading from the N-terminus, the 385-residue chain is Isocitrate dehydrogenase [NAD] subunit beta, mitochondrial (385 aa).

Residues 1-34 constitute a mitochondrion transit peptide; the sequence is MAALSGVRWLTRALVSAGNPGAWRGLSTSAAAHA. K199 bears the N6-acetyllysine mark.

Belongs to the isocitrate and isopropylmalate dehydrogenases family. In terms of assembly, heterooligomer of subunits alpha (IDH3A), beta (IDH3B), and gamma (IDH3G) in the apparent ratio of 2:1:1. The heterodimer containing one IDH3A and one IDH3B subunit and the heterodimer containing one IDH3A and one IDH3G subunit assemble into a heterotetramer (which contains two subunits of IDH3A, one of IDH3B and one of IDH3G) and further into the heterooctamer.

The protein localises to the mitochondrion. The heterotetramer and the heterodimer composed of IDH3A and IDH3G subunits can be allosterically activated by citrate (CIT) or/and ADP, and the two activators can act independently or synergistically. The heterodimer composed of IDH3A and IDH3B subunits cannot be allosterically regulated and the allosteric regulation of the heterotetramer is through the IDH3G subunit and not the IDH3B subunit. The IDH3G subunit contains the allosteric site which consists of a CIT-binding site and an ADP-binding site, and the binding of CIT and ADP causes conformational changes at the allosteric site which are transmitted to the active site in the catalytic subunit (IDH3A) through a cascade of conformational changes at the heterodimer interface, leading to stabilization of the isocitrate-binding at the active site and thus activation of the enzyme. ATP can activate the heterotetramer and the heterodimer composed of IDH3A and IDH3G subunits at low concentrations but inhibits their activities at high concentrations, whereas ATP exhibits only inhibitory effect on the heterodimer composed of IDH3A and IDH3B subunits. In terms of biological role, plays a structural role to facilitate the assembly and ensure the full activity of the enzyme catalyzing the decarboxylation of isocitrate (ICT) into alpha-ketoglutarate. The heterodimer composed of the alpha (IDH3A) and beta (IDH3B) subunits and the heterodimer composed of the alpha (IDH3A) and gamma (IDH3G) subunits, have considerable basal activity but the full activity of the heterotetramer (containing two subunits of IDH3A, one of IDH3B and one of IDH3G) requires the assembly and cooperative function of both heterodimers. This Macaca fascicularis (Crab-eating macaque) protein is Isocitrate dehydrogenase [NAD] subunit beta, mitochondrial (IDH3B).